The following is a 278-amino-acid chain: 4-hydroxy-3-methylbut-2-enyl diphosphate reductase (278 aa).

Residue Cys-12 coordinates [4Fe-4S] cluster. (2E)-4-hydroxy-3-methylbut-2-enyl diphosphate-binding residues include His-41 and His-74. Dimethylallyl diphosphate is bound by residues His-41 and His-74. 2 residues coordinate isopentenyl diphosphate: His-41 and His-74. Cys-96 is a binding site for [4Fe-4S] cluster. Residue His-124 coordinates (2E)-4-hydroxy-3-methylbut-2-enyl diphosphate. Dimethylallyl diphosphate is bound at residue His-124. Position 124 (His-124) interacts with isopentenyl diphosphate. Residue Glu-126 is the Proton donor of the active site. (2E)-4-hydroxy-3-methylbut-2-enyl diphosphate is bound at residue Thr-161. Cys-189 provides a ligand contact to [4Fe-4S] cluster. Residues Ser-217, Asn-219, and Ser-261 each coordinate (2E)-4-hydroxy-3-methylbut-2-enyl diphosphate. Ser-217, Asn-219, and Ser-261 together coordinate dimethylallyl diphosphate. Isopentenyl diphosphate-binding residues include Ser-217, Asn-219, and Ser-261.

It belongs to the IspH family. [4Fe-4S] cluster serves as cofactor.

It catalyses the reaction isopentenyl diphosphate + 2 oxidized [2Fe-2S]-[ferredoxin] + H2O = (2E)-4-hydroxy-3-methylbut-2-enyl diphosphate + 2 reduced [2Fe-2S]-[ferredoxin] + 2 H(+). The catalysed reaction is dimethylallyl diphosphate + 2 oxidized [2Fe-2S]-[ferredoxin] + H2O = (2E)-4-hydroxy-3-methylbut-2-enyl diphosphate + 2 reduced [2Fe-2S]-[ferredoxin] + 2 H(+). The protein operates within isoprenoid biosynthesis; dimethylallyl diphosphate biosynthesis; dimethylallyl diphosphate from (2E)-4-hydroxy-3-methylbutenyl diphosphate: step 1/1. It participates in isoprenoid biosynthesis; isopentenyl diphosphate biosynthesis via DXP pathway; isopentenyl diphosphate from 1-deoxy-D-xylulose 5-phosphate: step 6/6. Its function is as follows. Catalyzes the conversion of 1-hydroxy-2-methyl-2-(E)-butenyl 4-diphosphate (HMBPP) into a mixture of isopentenyl diphosphate (IPP) and dimethylallyl diphosphate (DMAPP). Acts in the terminal step of the DOXP/MEP pathway for isoprenoid precursor biosynthesis. This is 4-hydroxy-3-methylbut-2-enyl diphosphate reductase from Anaeromyxobacter sp. (strain K).